Reading from the N-terminus, the 365-residue chain is Peptide chain release factor 2 (365 aa).

Q252 carries the N5-methylglutamine modification.

It belongs to the prokaryotic/mitochondrial release factor family. Methylated by PrmC. Methylation increases the termination efficiency of RF2.

The protein localises to the cytoplasm. Peptide chain release factor 2 directs the termination of translation in response to the peptide chain termination codons UGA and UAA. The polypeptide is Peptide chain release factor 2 (Pectobacterium atrosepticum (strain SCRI 1043 / ATCC BAA-672) (Erwinia carotovora subsp. atroseptica)).